A 370-amino-acid polypeptide reads, in one-letter code: Probable endopolygalacturonase A (370 aa).

The signal sequence occupies residues 1 to 19 (MPSAKPLFCLATLAGAALA). Residues 20–32 (APAPSRATDFNKR) constitute a propeptide that is removed on maturation. Cys-35 and Cys-50 are disulfide-bonded. PbH1 repeat units lie at residues 162–192 (SDNL…DISE), 193–214 (STYI…AINS), 215–235 (GENI…SIGS), 244–265 (VKNV…RIKT), 273–295 (VEDI…VIEQ), and 307–352 (SNGV…DITG). Asp-207 serves as the catalytic Proton donor. A disulfide bond links Cys-209 and Cys-225. His-229 is an active-site residue. The N-linked (GlcNAc...) asparagine glycan is linked to Asn-246. Intrachain disulfides connect Cys-335–Cys-340 and Cys-359–Cys-368.

This sequence belongs to the glycosyl hydrolase 28 family.

The protein resides in the secreted. It carries out the reaction (1,4-alpha-D-galacturonosyl)n+m + H2O = (1,4-alpha-D-galacturonosyl)n + (1,4-alpha-D-galacturonosyl)m.. Involved in maceration and soft-rotting of plant tissue. Hydrolyzes the 1,4-alpha glycosidic bonds of de-esterified pectate in the smooth region of the plant cell wall. The polypeptide is Probable endopolygalacturonase A (pgaA) (Aspergillus kawachii (strain NBRC 4308) (White koji mold)).